The chain runs to 429 residues: Adenylosuccinate synthetase (429 aa).

Residues 12–18 (GDEGKGK) and 40–42 (GHT) each bind GTP. The active-site Proton acceptor is the Asp-13. Asp-13 and Gly-40 together coordinate Mg(2+). IMP is bound by residues 13–16 (DEGK), 38–41 (NAGH), Thr-128, Arg-142, Gln-223, Thr-238, and Arg-302. His-41 functions as the Proton donor in the catalytic mechanism. Residue 298 to 304 (VNTGRKR) participates in substrate binding. Residues Arg-304, 330–332 (KLD), and 412–414 (GVG) each bind GTP.

The protein belongs to the adenylosuccinate synthetase family. As to quaternary structure, homodimer. Mg(2+) serves as cofactor.

Its subcellular location is the cytoplasm. The enzyme catalyses IMP + L-aspartate + GTP = N(6)-(1,2-dicarboxyethyl)-AMP + GDP + phosphate + 2 H(+). Its pathway is purine metabolism; AMP biosynthesis via de novo pathway; AMP from IMP: step 1/2. In terms of biological role, plays an important role in the de novo pathway of purine nucleotide biosynthesis. Catalyzes the first committed step in the biosynthesis of AMP from IMP. The polypeptide is Adenylosuccinate synthetase (Corynebacterium glutamicum (strain R)).